Consider the following 339-residue polypeptide: 5-dehydro-2-deoxygluconokinase (339 aa).

It belongs to the carbohydrate kinase PfkB family.

The catalysed reaction is 5-dehydro-2-deoxy-D-gluconate + ATP = 6-phospho-5-dehydro-2-deoxy-D-gluconate + ADP + H(+). It participates in polyol metabolism; myo-inositol degradation into acetyl-CoA; acetyl-CoA from myo-inositol: step 5/7. Its function is as follows. Catalyzes the phosphorylation of 5-dehydro-2-deoxy-D-gluconate (2-deoxy-5-keto-D-gluconate or DKG) to 6-phospho-5-dehydro-2-deoxy-D-gluconate (DKGP). This is 5-dehydro-2-deoxygluconokinase from Clostridium botulinum (strain Eklund 17B / Type B).